The following is a 98-amino-acid chain: MTLTTMNILLAFFFSLLGTLIFRSHLMSTLLCLEGMMLSLFIMTTITALDTQSMVMYTIPITTLVFAACEAAVGLALLTMVSNTYGTDHVQNLNLLQC.

A run of 3 helical transmembrane segments spans residues 2-22 (TLTT…TLIF), 29-49 (TLLC…ITAL), and 61-81 (ITTL…LTMV).

The protein belongs to the complex I subunit 4L family. In terms of assembly, core subunit of respiratory chain NADH dehydrogenase (Complex I) which is composed of 45 different subunits.

It is found in the mitochondrion inner membrane. It carries out the reaction a ubiquinone + NADH + 5 H(+)(in) = a ubiquinol + NAD(+) + 4 H(+)(out). Its function is as follows. Core subunit of the mitochondrial membrane respiratory chain NADH dehydrogenase (Complex I) which catalyzes electron transfer from NADH through the respiratory chain, using ubiquinone as an electron acceptor. Part of the enzyme membrane arm which is embedded in the lipid bilayer and involved in proton translocation. The polypeptide is NADH-ubiquinone oxidoreductase chain 4L (MT-ND4L) (Oxymycterus rufus (Red hocicudo)).